The following is a 193-amino-acid chain: Putative manganese efflux pump MntP (193 aa).

Transmembrane regions (helical) follow at residues 6-26 (VIFI…GIAC), 48-68 (AGMV…ISAF), 71-91 (WIAF…ALQG), 108-128 (LLGV…AFAV), 132-152 (NIGL…FLGF), and 165-185 (WVGV…LAEH).

This sequence belongs to the MntP (TC 9.B.29) family.

The protein localises to the cell membrane. In terms of biological role, probably functions as a manganese efflux pump. The chain is Putative manganese efflux pump MntP from Dehalococcoides mccartyi (strain ATCC BAA-2100 / JCM 16839 / KCTC 5957 / BAV1).